Here is a 346-residue protein sequence, read N- to C-terminus: Probable galacturonosyltransferase-like 6 (346 aa).

Residues 1–21 (MLWITRFAGLFSAAMAVIVLS) traverse the membrane as a helical; Signal-anchor for type II membrane protein segment. Over 22-346 (PSLQSFPPAA…TPYDLYRHSH (325 aa)) the chain is Lumenal. N-linked (GlcNAc...) asparagine glycosylation occurs at N203.

The protein belongs to the glycosyltransferase 8 family.

It localises to the golgi apparatus membrane. It functions in the pathway glycan metabolism; pectin biosynthesis. In terms of biological role, may be involved in pectin and/or xylans biosynthesis in cell walls. This chain is Probable galacturonosyltransferase-like 6 (GATL6), found in Arabidopsis thaliana (Mouse-ear cress).